A 194-amino-acid chain; its full sequence is Imidazoleglycerol-phosphate dehydratase (194 aa).

The protein belongs to the imidazoleglycerol-phosphate dehydratase family.

The protein localises to the cytoplasm. The catalysed reaction is D-erythro-1-(imidazol-4-yl)glycerol 3-phosphate = 3-(imidazol-4-yl)-2-oxopropyl phosphate + H2O. The protein operates within amino-acid biosynthesis; L-histidine biosynthesis; L-histidine from 5-phospho-alpha-D-ribose 1-diphosphate: step 6/9. The chain is Imidazoleglycerol-phosphate dehydratase from Listeria welshimeri serovar 6b (strain ATCC 35897 / DSM 20650 / CCUG 15529 / CIP 8149 / NCTC 11857 / SLCC 5334 / V8).